We begin with the raw amino-acid sequence, 602 residues long: Bifunctional xylanase/deacetylase (602 aa).

The N-terminal stretch at 1–14 (MSATLLVPSMTVKA) is a signal peptide. Residues 17–211 (TIYNNKTGNQ…SSGSASVYKN (195 aa)) enclose the GH11 domain. The Nucleophile role is filled by Glu108. The active-site Proton donor is Glu198. The tract at residues 216 to 240 (GGSSSSSGNQGGNQGGNTGNENAGN) is disordered. Gly residues predominate over residues 224-233 (NQGGNQGGNT). Residues 249–366 (DKIQCETMTK…DAYLDYFNNS (118 aa)) form the CBM6 domain. The 177-residue stretch at 402-578 (KLIALTFDDG…GLKNQGYTFV (177 aa)) folds into the NodB homology domain.

The protein belongs to the glycosyl hydrolase 11 (cellulase G) family. Post-translationally, in the later growth phases, seems to undergo a proteolytic cleavage into a 30 kDa protein possessing xylanolytic activity.

It is found in the secreted. It catalyses the reaction Endohydrolysis of (1-&gt;4)-beta-D-xylosidic linkages in xylans.. Its pathway is glycan degradation; xylan degradation. Its function is as follows. Endo-acting xylanase which specifically cleaves internal linkages on the xylan backbone, releasing xylooligosaccharides. Is also probably able, via its C-terminal domain, to remove acetyl groups from acetylated xylan, and thus it is probably capable of hydrolyzing acetylated xylan. The polypeptide is Bifunctional xylanase/deacetylase (xyn11A) (Pseudobutyrivibrio xylanivorans).